The following is an 876-amino-acid chain: MSKSTAEIRQAFLDFFHSKGHQVVASSSLVPNNDPTLLFTNAGMNQFKDVFLGLDKRNYSRATTSQRCVRAGGKHNDLENVGYTARHHTFFEMLGNFSFGDYFKHDAIQFAWELLTGENWFALPKERLWVTVYETDDETYEIWEKEVGIPRERIIRIGDNKGAPYASDNFWQMGDTGPCGPCTEIFYDHGDHIWGGPPGSPEEDGDRYIEIWNIVFMQFNRQADGTMEPLPKPSVDTGMGLERIAAVLQHVNSNYDIDLFRTLIEAVAKVTGATDLGNKSLRVIADHIRSCAFLVADGVLPSNENRGYVLRRIIRRAVRHGNMLGAKETFFYKLVGPLIEVMGSAGEELKRQQAQVEQVLKTEEEQFARTLERGLALLDEELAKLQGDTLDGETAFRLYDTYGFPVDLTADVCRERNIKVDEVGFEAAMEEQRRRAREASGFGADYNAMIRVDSASEFKGYDHLELNGKVTALFVDGKAVEAINAGQEAVVVLDQTPFYAESGGQVGDKGELKGAGFTFAVDDTQKYGQAIGHIGKLSAGALKVGDAVQADVDEARRARIRLNHSATHLMHAALRQVLGTHVAQKGSLVSDKVLRFDFSHNEAMKPSEIRQVEDLVNAQIRRNLPIETNIMDLDAAKAKGAMALFGEKYDERVRVLSMGDFSTELCGGTHASRTGDIGLFRIISESGTAAGIRRIEAVTGEGAMATVHAQSDRLNDIAHLLKGDSQNLGDKVRAVLERTRQLEKELQQLKDQAAAQESANLSSKAVDLNGVKLLVSELAGIEPKMLRTMVDDLKNQLVSTVIVLATVVEGKVSLIAGVSKDVTDRVKAGELIGMVAQQVGGKGGGRPDMAQAGGTDAAALPAALASVQGWVSAKLQ.

Residues His564, His568, Cys666, and His670 each contribute to the Zn(2+) site.

Belongs to the class-II aminoacyl-tRNA synthetase family. As to quaternary structure, homotetramer. Zn(2+) serves as cofactor.

It localises to the cytoplasm. It catalyses the reaction tRNA(Ala) + L-alanine + ATP = L-alanyl-tRNA(Ala) + AMP + diphosphate. In terms of biological role, catalyzes the attachment of alanine to tRNA(Ala) in a two-step reaction: alanine is first activated by ATP to form Ala-AMP and then transferred to the acceptor end of tRNA(Ala). Also edits incorrectly charged Ser-tRNA(Ala) and Gly-tRNA(Ala) via its editing domain. The sequence is that of Alanine--tRNA ligase from Salmonella paratyphi A (strain ATCC 9150 / SARB42).